Reading from the N-terminus, the 81-residue chain is Protein Vpu (81 aa).

Residues 1–7 are Extracellular-facing; sequence MSNLLAI. A helical membrane pass occupies residues 8 to 28; the sequence is GIAALIVALIITIVVWTIAYI. Topologically, residues 29–81 are cytoplasmic; sequence EYKKLVRQRKINRLYKRISERAEDSGNESEGDAEELAALGEVGPFIPGDINNL. Residues serine 53 and serine 57 each carry the phosphoserine; by host CK2 modification.

It belongs to the HIV-1 VPU protein family. In terms of assembly, homopentamer. Interacts with host CD4 and BRTC; these interactions induce proteasomal degradation of CD4. Interacts with host BST2; this interaction leads to the degradation of host BST2. Interacts with host FBXW11. Interacts with host AP1M1; this interaction plays a role in the mistrafficking and subsequent degradation of host BST2. Interacts with host RANBP2; this interaction allows Vpu to down-regulate host BLM sumoylation. Phosphorylated by host CK2. This phosphorylation is necessary for interaction with human BTRC and degradation of CD4.

Its subcellular location is the host membrane. Its activity is regulated as follows. Ion channel activity is inhibited by hexamethylene amiloride in vitro. Its function is as follows. Enhances virion budding by targeting host CD4 and Tetherin/BST2 to proteasome degradation. Degradation of CD4 prevents any unwanted premature interactions between viral Env and its host receptor CD4 in the endoplasmic reticulum. Degradation of antiretroviral protein Tetherin/BST2 is important for virion budding, as BST2 tethers new viral particles to the host cell membrane. Mechanistically, Vpu bridges either CD4 or BST2 to BTRC, a substrate recognition subunit of the Skp1/Cullin/F-box protein E3 ubiquitin ligase, induces their ubiquitination and subsequent proteasomal degradation. The alteration of the E3 ligase specificity by Vpu seems to promote the degradation of host IKBKB, leading to NF-kappa-B down-regulation and subsequent apoptosis. Acts as a viroporin that forms an oligomeric ion channel in membranes. Modulates the host DNA repair mechanisms to promote degradation of nuclear viral cDNA in cells that are already productively infected in order to suppress immune sensing and proviral hyper-integration (superinfection). Manipulates PML-NBs and modulates SUMOylation of host BLM protein thereby enhancing its DNA-end processing activity toward viral unintegrated linear DNA. Also inhibits RAD52-mediated homologous repair of viral cDNA, preventing the generation of dead-end circular forms of single copies of the long terminal repeat and permitting sustained nucleolytic attack. The sequence is that of Protein Vpu from Homo sapiens (Human).